We begin with the raw amino-acid sequence, 446 residues long: tRNA-2-methylthio-N(6)-dimethylallyladenosine synthase (446 aa).

An MTTase N-terminal domain is found at 3-120; that stretch reads QKLFIKTYGC…LPEMVNSVAH (118 aa). [4Fe-4S] cluster contacts are provided by C12, C49, C83, C157, C161, and C164. Residues 143–375 enclose the Radical SAM core domain; that stretch reads SSEGASAFVS…QQRILQFAQD (233 aa). The TRAM domain maps to 378-442; sequence RKMVGSTQRI…PNSLRGERVD (65 aa).

It belongs to the methylthiotransferase family. MiaB subfamily. In terms of assembly, monomer. [4Fe-4S] cluster is required as a cofactor.

It is found in the cytoplasm. It catalyses the reaction N(6)-dimethylallyladenosine(37) in tRNA + (sulfur carrier)-SH + AH2 + 2 S-adenosyl-L-methionine = 2-methylsulfanyl-N(6)-dimethylallyladenosine(37) in tRNA + (sulfur carrier)-H + 5'-deoxyadenosine + L-methionine + A + S-adenosyl-L-homocysteine + 2 H(+). Its function is as follows. Catalyzes the methylthiolation of N6-(dimethylallyl)adenosine (i(6)A), leading to the formation of 2-methylthio-N6-(dimethylallyl)adenosine (ms(2)i(6)A) at position 37 in tRNAs that read codons beginning with uridine. The protein is tRNA-2-methylthio-N(6)-dimethylallyladenosine synthase of Hahella chejuensis (strain KCTC 2396).